The following is a 343-amino-acid chain: Endoglucanase C (343 aa).

The active-site Proton donor is glutamate 140. Catalysis depends on glutamate 280, which acts as the Nucleophile.

This sequence belongs to the glycosyl hydrolase 5 (cellulase A) family.

It catalyses the reaction Endohydrolysis of (1-&gt;4)-beta-D-glucosidic linkages in cellulose, lichenin and cereal beta-D-glucans.. It participates in glycan metabolism; cellulose degradation. In terms of biological role, this enzyme catalyzes the endohydrolysis of 1,4-beta-glucosidic linkages in cellulose, lichenin and cereal beta-D-glucans. This Acetivibrio thermocellus (strain ATCC 27405 / DSM 1237 / JCM 9322 / NBRC 103400 / NCIMB 10682 / NRRL B-4536 / VPI 7372) (Clostridium thermocellum) protein is Endoglucanase C (celC).